A 335-amino-acid chain; its full sequence is UPF0104 membrane protein PH1989 (335 aa).

The next 8 membrane-spanning stretches (helical) occupy residues Y4 to E24, D34 to V54, G62 to L82, I122 to I142, L148 to F168, L231 to L251, A266 to V286, and V304 to V324.

This sequence belongs to the UPF0104 family.

It localises to the cell membrane. The polypeptide is UPF0104 membrane protein PH1989 (Pyrococcus horikoshii (strain ATCC 700860 / DSM 12428 / JCM 9974 / NBRC 100139 / OT-3)).